Reading from the N-terminus, the 300-residue chain is Tyrosine recombinase XerC (300 aa).

The region spanning 4–90 (VALSLDVSRF…ALRSFFDWLV (87 aa)) is the Core-binding (CB) domain. Positions 111–290 (HLPKNIDVDD…DFQHLASVYD (180 aa)) constitute a Tyr recombinase domain. Active-site residues include Arg150, Lys174, His242, Arg245, and His268. The active-site O-(3'-phospho-DNA)-tyrosine intermediate is the Tyr277.

This sequence belongs to the 'phage' integrase family. XerC subfamily. In terms of assembly, forms a cyclic heterotetrameric complex composed of two molecules of XerC and two molecules of XerD, in which XerC interacts with XerD via its C-terminal region, XerD interacts with XerC via its C-terminal region and so on.

It is found in the cytoplasm. FtsK may regulate the catalytic switch between XerC and XerD in the heterotetrameric complex during the two steps of the recombination process. In terms of biological role, site-specific tyrosine recombinase, which acts by catalyzing the cutting and rejoining of the recombining DNA molecules. Binds cooperatively to specific DNA consensus sequences that are separated from XerD binding sites by a short central region, forming the heterotetrameric XerC-XerD complex that recombines DNA substrates. The complex is essential to convert dimers of the bacterial chromosome into monomers to permit their segregation at cell division. It also contributes to the segregational stability of plasmids. In the complex XerC specifically exchanges the top DNA strands. This is Tyrosine recombinase XerC from Salmonella typhi.